We begin with the raw amino-acid sequence, 416 residues long: CinA-like protein (416 aa).

The protein belongs to the CinA family.

The protein is CinA-like protein of Nostoc punctiforme (strain ATCC 29133 / PCC 73102).